The following is a 258-amino-acid chain: Tegument protein VP22 (258 aa).

The tract at residues 66 to 143 (VQPAARGRDR…RAPPGANAVA (78 aa)) is disordered. Residues 77–118 (AAAGTTVAAPAAAPARRSSSRASSRPPRAAADPPVLRPATRG) are compositionally biased toward low complexity. A Nuclear localization signal motif is present at residues 131–134 (PRPR). The Nuclear export signal signature appears at 204-216 (LDRMLKSAAIRIL). The interval 234–258 (RAQRPAARGSTSGGESRLRGERARP) is disordered. The span at 249 to 258 (SRLRGERARP) shows a compositional bias: basic and acidic residues.

It belongs to the alphaherpesvirinae VP22 tegument protein family. In terms of assembly, interacts with gE (via C-terminus); this interaction is necessary for the recruitment of VP22 to the Golgi and its packaging into virions. Interacts with gM (via C-terminus). Interacts with VP16; this interaction allows the formation of a tripartite complex composed of VP16, VP22 and UL41/VHS. Interacts with the capsid-binding protein UL16. Interacts with host CGAS. In terms of processing, highly phosphorylated in the host cell. Packaging is selective for underphosphorylated forms.

Its subcellular location is the virion tegument. The protein resides in the host cytoplasm. It localises to the host nucleus. It is found in the host Golgi apparatus. Tegument protein that plays different roles during the time course of infection. Participates in both the accumulation of viral mRNAs and viral protein translation at late time of infection. Modulates the RNase activity of the virion host shutoff protein UL41 probably to ensure necessary levels of key cellular mRNAs and proteins. Plays a role in microtubule reorganization that occurs after viral infection by stabilizing microtubule network. Plays a role in the inhibition of host innate immune system by targeting the CGAS enzymatic activity which is the principal cytosolic DNA sensor that detects invading viral DNA. Acts by mediating disruption of liquid-like droplets in which CGAS is activated, thereby preventing CGAS activity. This is Tegument protein VP22 from Bovine herpesvirus 1.1 (strain Cooper) (BoHV-1).